The following is a 469-amino-acid chain: Ubiquitin carboxyl-terminal hydrolase MINDY-1 (469 aa).

The tract at residues 1-85 (MEHHQPEDPA…APPGPTLGTL (85 aa)) is disordered. The segment covering 34 to 53 (HPQDTDARDADGEAGEREPA) has biased composition (basic and acidic residues). At Ser-103 the chain carries Phosphoserine. The Nucleophile role is filled by Cys-137. The active-site Proton acceptor is the His-319. A ubiquitin-binding domain (UBD) region spans residues 388–426 (QVDQDYLIALSLQQQQPRGTLGLTDLELAQQLQQEEYQQ). Residues 428–469 (QAAQPVWMRTRALSPQGRGATSGRPAGERRQRPKHESDCILL) are disordered. Ser-441 is subject to Phosphoserine. Residues 453 to 469 (AGERRQRPKHESDCILL) are compositionally biased toward basic and acidic residues.

Belongs to the MINDY deubiquitinase family. FAM63 subfamily.

It carries out the reaction Thiol-dependent hydrolysis of ester, thioester, amide, peptide and isopeptide bonds formed by the C-terminal Gly of ubiquitin (a 76-residue protein attached to proteins as an intracellular targeting signal).. Hydrolase that can specifically remove 'Lys-48'-linked conjugated ubiquitin from proteins. Has exodeubiquitinase activity and has a preference for long polyubiquitin chains. May play a regulatory role at the level of protein turnover. The protein is Ubiquitin carboxyl-terminal hydrolase MINDY-1 (MINDY1) of Pongo abelii (Sumatran orangutan).